The following is a 372-amino-acid chain: Serine proteinase inhibitor 1 (372 aa).

It belongs to the serpin family. Poxviruses subfamily.

It is found in the host cytoplasm. In terms of biological role, plays a role in mediating viral host range. May act to inhibit a caspase independent form of apoptosis to allow efficient virus replication in infected cells. The protein is Serine proteinase inhibitor 1 (OPG208) of Homo sapiens (Human).